Reading from the N-terminus, the 189-residue chain is Elongation factor P (189 aa).

An N6-(3,6-diaminohexanoyl)-5-hydroxylysine modification is found at K34.

The protein belongs to the elongation factor P family. May be beta-lysylated on the epsilon-amino group of Lys-34 by the combined action of EpmA and EpmB, and then hydroxylated on the C5 position of the same residue by EpmC (if this protein is present). Lysylation is critical for the stimulatory effect of EF-P on peptide-bond formation. The lysylation moiety may extend toward the peptidyltransferase center and stabilize the terminal 3-CCA end of the tRNA. Hydroxylation of the C5 position on Lys-34 may allow additional potential stabilizing hydrogen-bond interactions with the P-tRNA.

It is found in the cytoplasm. It functions in the pathway protein biosynthesis; polypeptide chain elongation. Functionally, involved in peptide bond synthesis. Alleviates ribosome stalling that occurs when 3 or more consecutive Pro residues or the sequence PPG is present in a protein, possibly by augmenting the peptidyl transferase activity of the ribosome. Modification of Lys-34 is required for alleviation. This is Elongation factor P from Buchnera aphidicola subsp. Baizongia pistaciae (strain Bp).